The primary structure comprises 383 residues: Glutaminyl-peptide cyclotransferase-like protein (383 aa).

A helical membrane pass occupies residues 33–53 (VQFLPLLLLALAMGLAFYIVW). A disulfide bridge connects residues cysteine 168 and cysteine 192. Aspartate 187 contacts Zn(2+). Glutamate 226 serves as the catalytic Proton acceptor. Zn(2+) is bound at residue glutamate 227. The active-site Proton acceptor is aspartate 270. Histidine 352 contacts Zn(2+).

Belongs to the glutaminyl-peptide cyclotransferase family. Detected in thalamus, hippocampus, brain cortex, cerebellum, kidney, lung and liver, and at low levels in heart and spleen.

Its subcellular location is the golgi apparatus membrane. The catalysed reaction is N-terminal L-glutaminyl-[peptide] = N-terminal 5-oxo-L-prolyl-[peptide] + NH4(+). Its function is as follows. Responsible for the biosynthesis of pyroglutamyl peptides. The polypeptide is Glutaminyl-peptide cyclotransferase-like protein (Qpctl) (Mus musculus (Mouse)).